A 270-amino-acid chain; its full sequence is Putative pyruvate, phosphate dikinase regulatory protein 2 (270 aa).

151-158 lines the ADP pocket; sequence GVSRTSKT.

It belongs to the pyruvate, phosphate/water dikinase regulatory protein family. PDRP subfamily.

It carries out the reaction N(tele)-phospho-L-histidyl/L-threonyl-[pyruvate, phosphate dikinase] + ADP = N(tele)-phospho-L-histidyl/O-phospho-L-threonyl-[pyruvate, phosphate dikinase] + AMP + H(+). It catalyses the reaction N(tele)-phospho-L-histidyl/O-phospho-L-threonyl-[pyruvate, phosphate dikinase] + phosphate + H(+) = N(tele)-phospho-L-histidyl/L-threonyl-[pyruvate, phosphate dikinase] + diphosphate. In terms of biological role, bifunctional serine/threonine kinase and phosphorylase involved in the regulation of the pyruvate, phosphate dikinase (PPDK) by catalyzing its phosphorylation/dephosphorylation. The sequence is that of Putative pyruvate, phosphate dikinase regulatory protein 2 from Listeria monocytogenes serovar 1/2a (strain ATCC BAA-679 / EGD-e).